The primary structure comprises 866 residues: Scm-like with four MBT domains protein 1 (866 aa).

MBT repeat units lie at residues 20 to 120 (LSWE…LEAP), 128 to 232 (SDWD…LQPP), 242 to 348 (AEWQ…ISPP), and 356 to 453 (FDWA…LSTP). The interval 34–42 (VPYGSFKHV) is antigenic epitope. A disordered region spans residues 641 to 777 (KKKNKRIGRP…DDENKPPSPK (137 aa)). The segment covering 663-682 (KASKRRKRRKNVFVHKKKRS) has biased composition (basic residues). Polar residues predominate over residues 683 to 694 (SASVDNTPAGSP). 2 stretches are compositionally biased toward acidic residues: residues 699–713 (GEDE…DDSL) and 721–730 (QQDELQEESE). Residues 737 to 749 (CSSSPTQSEISTS) are compositionally biased toward low complexity. Residues Ser-767 and Ser-775 each carry the phosphoserine modification. An SAM domain is found at 796–864 (WSVADVVRFI…RIKFAFYEQF (69 aa)).

Interacts with MYOD1. Component of the SLC (SFMBT1-LSD1-CoREST) corepressor complex, which also contains KDM1A/LSD1 and RCOR1/CoREST. Interacts with KDM1A/LSD1 and RCOR1/CoREST. Interacts with L3MBTL3. In terms of tissue distribution, expressed in all cell lines and normal tissues tested, including the thymus.

The protein resides in the nucleus. In terms of biological role, histone-binding protein, which is part of various corepressor complexes. Mediates the recruitment of corepressor complexes to target genes, followed by chromatin compaction and repression of transcription. Plays a role during myogenesis: required for the maintenance of undifferentiated states of myogenic progenitor cells via interaction with MYOD1. Interaction with MYOD1 leads to the recruitment of associated corepressors and silencing of MYOD1 target genes. Part of the SLC complex in germ cells, where it may play a role during spermatogenesis. The protein is Scm-like with four MBT domains protein 1 (SFMBT1) of Homo sapiens (Human).